The chain runs to 247 residues: Cell division protein ZapD (247 aa).

Belongs to the ZapD family. Interacts with FtsZ.

The protein localises to the cytoplasm. Cell division factor that enhances FtsZ-ring assembly. Directly interacts with FtsZ and promotes bundling of FtsZ protofilaments, with a reduction in FtsZ GTPase activity. The protein is Cell division protein ZapD of Cronobacter sakazakii (strain ATCC BAA-894) (Enterobacter sakazakii).